We begin with the raw amino-acid sequence, 214 residues long: Phosphatidylserine decarboxylase proenzyme (214 aa).

The active-site Schiff-base intermediate with substrate; via pyruvic acid is Ser182. Residue Ser182 is modified to Pyruvic acid (Ser); by autocatalysis.

It belongs to the phosphatidylserine decarboxylase family. PSD-A subfamily. In terms of assembly, heterodimer of a large membrane-associated beta subunit and a small pyruvoyl-containing alpha subunit. Pyruvate is required as a cofactor. Is synthesized initially as an inactive proenzyme. Formation of the active enzyme involves a self-maturation process in which the active site pyruvoyl group is generated from an internal serine residue via an autocatalytic post-translational modification. Two non-identical subunits are generated from the proenzyme in this reaction, and the pyruvate is formed at the N-terminus of the alpha chain, which is derived from the carboxyl end of the proenzyme. The post-translation cleavage follows an unusual pathway, termed non-hydrolytic serinolysis, in which the side chain hydroxyl group of the serine supplies its oxygen atom to form the C-terminus of the beta chain, while the remainder of the serine residue undergoes an oxidative deamination to produce ammonia and the pyruvoyl prosthetic group on the alpha chain.

It is found in the cell membrane. The catalysed reaction is a 1,2-diacyl-sn-glycero-3-phospho-L-serine + H(+) = a 1,2-diacyl-sn-glycero-3-phosphoethanolamine + CO2. Its pathway is phospholipid metabolism; phosphatidylethanolamine biosynthesis; phosphatidylethanolamine from CDP-diacylglycerol: step 2/2. In terms of biological role, catalyzes the formation of phosphatidylethanolamine (PtdEtn) from phosphatidylserine (PtdSer). In Solidesulfovibrio magneticus (strain ATCC 700980 / DSM 13731 / RS-1) (Desulfovibrio magneticus), this protein is Phosphatidylserine decarboxylase proenzyme.